The following is a 795-amino-acid chain: Inactive N-acetylated-alpha-linked acidic dipeptidase-like protein 2 (795 aa).

A disordered region spans residues 1–38 (MGENEASLPNTSLQGKKMAYQKVHADQRAPGHSQYLDN). Residues 1–121 (MGENEASLPN…RSAPKSNRCN (121 aa)) are Cytoplasmic-facing. Position 92 is a phosphoserine (Ser92). The chain crosses the membrane as a helical; Signal-anchor for type II membrane protein span at residues 122–142 (FCHVLKILCTATILFIFGILI). Residues 143 to 795 (GYYVHTNCPS…VFKSVLDGKN (653 aa)) lie on the Extracellular side of the membrane. Residues Asn295, Asn373, Asn534, and Asn759 are each glycosylated (N-linked (GlcNAc...) asparagine).

The protein belongs to the peptidase M28 family. M28B subfamily. Expressed at higher level in kidney and placenta. In embryo, it is mainly confined to duodenal and stomach endoderm, mesonephros, metanephros and pancreas.

It localises to the membrane. Its function is as follows. May be catalytically inactive. In Homo sapiens (Human), this protein is Inactive N-acetylated-alpha-linked acidic dipeptidase-like protein 2 (NAALADL2).